A 274-amino-acid polypeptide reads, in one-letter code: 3-methyl-2-oxobutanoate hydroxymethyltransferase (274 aa).

Residues Asp-46 and Asp-85 each coordinate Mg(2+). 3-methyl-2-oxobutanoate contacts are provided by residues 46–47 (DS), Asp-85, and Lys-115. Glu-117 is a binding site for Mg(2+). Glu-184 (proton acceptor) is an active-site residue.

It belongs to the PanB family. As to quaternary structure, homodecamer; pentamer of dimers. The cofactor is Mg(2+).

The protein localises to the cytoplasm. The catalysed reaction is 3-methyl-2-oxobutanoate + (6R)-5,10-methylene-5,6,7,8-tetrahydrofolate + H2O = 2-dehydropantoate + (6S)-5,6,7,8-tetrahydrofolate. The protein operates within cofactor biosynthesis; coenzyme A biosynthesis. Catalyzes the reversible reaction in which hydroxymethyl group from 5,10-methylenetetrahydrofolate is transferred onto alpha-ketoisovalerate to form ketopantoate. The protein is 3-methyl-2-oxobutanoate hydroxymethyltransferase of Halobacterium salinarum (strain ATCC 29341 / DSM 671 / R1).